A 389-amino-acid chain; its full sequence is Succinate--CoA ligase [ADP-forming] subunit beta (389 aa).

An ATP-grasp domain is found at 9-244 (KQLLAEYGIP…KTQEDETEVT (236 aa)). ATP-binding positions include K46, 53 to 55 (GRG), G102, and E107. Residues N199 and D213 each contribute to the Mg(2+) site. Residues N264 and 321-323 (GIV) contribute to the substrate site.

Belongs to the succinate/malate CoA ligase beta subunit family. Heterotetramer of two alpha and two beta subunits. Mg(2+) is required as a cofactor.

It catalyses the reaction succinate + ATP + CoA = succinyl-CoA + ADP + phosphate. The enzyme catalyses GTP + succinate + CoA = succinyl-CoA + GDP + phosphate. It participates in carbohydrate metabolism; tricarboxylic acid cycle; succinate from succinyl-CoA (ligase route): step 1/1. In terms of biological role, succinyl-CoA synthetase functions in the citric acid cycle (TCA), coupling the hydrolysis of succinyl-CoA to the synthesis of either ATP or GTP and thus represents the only step of substrate-level phosphorylation in the TCA. The beta subunit provides nucleotide specificity of the enzyme and binds the substrate succinate, while the binding sites for coenzyme A and phosphate are found in the alpha subunit. The sequence is that of Succinate--CoA ligase [ADP-forming] subunit beta from Xanthomonas euvesicatoria pv. vesicatoria (strain 85-10) (Xanthomonas campestris pv. vesicatoria).